Reading from the N-terminus, the 416-residue chain is Serine hydroxymethyltransferase (416 aa).

(6S)-5,6,7,8-tetrahydrofolate is bound by residues Leu120 and 124 to 126; that span reads GHL. Residue Lys230 is modified to N6-(pyridoxal phosphate)lysine. Glu246 is a binding site for (6S)-5,6,7,8-tetrahydrofolate.

It belongs to the SHMT family. In terms of assembly, homodimer. Requires pyridoxal 5'-phosphate as cofactor.

The protein localises to the cytoplasm. The enzyme catalyses (6R)-5,10-methylene-5,6,7,8-tetrahydrofolate + glycine + H2O = (6S)-5,6,7,8-tetrahydrofolate + L-serine. It functions in the pathway one-carbon metabolism; tetrahydrofolate interconversion. It participates in amino-acid biosynthesis; glycine biosynthesis; glycine from L-serine: step 1/1. Catalyzes the reversible interconversion of serine and glycine with tetrahydrofolate (THF) serving as the one-carbon carrier. This reaction serves as the major source of one-carbon groups required for the biosynthesis of purines, thymidylate, methionine, and other important biomolecules. Also exhibits THF-independent aldolase activity toward beta-hydroxyamino acids, producing glycine and aldehydes, via a retro-aldol mechanism. In Onion yellows phytoplasma (strain OY-M), this protein is Serine hydroxymethyltransferase.